Consider the following 169-residue polypeptide: Allophycocyanin subunit beta-18 (169 aa).

N4-methylasparagine is present on Asn72. Cys82 contacts (2R,3E)-phycocyanobilin.

The protein belongs to the phycobiliprotein family. As to quaternary structure, heterodimer of an alpha and a beta chain. Contains one covalently linked phycocyanobilin chromophore.

Its subcellular location is the plastid. It localises to the cyanelle thylakoid membrane. In terms of biological role, light-harvesting photosynthetic bile pigment-protein from the phycobiliprotein complex. Allophycocyanin has a maximum absorption at approximately 650 nanometers. This Cyanophora paradoxa protein is Allophycocyanin subunit beta-18 (apcF).